We begin with the raw amino-acid sequence, 415 residues long: Multidrug resistance protein MdtA (415 aa).

The N-terminal stretch at 1-21 (MKGSYKSRWVIVIVVVIAAIA) is a signal peptide. Disordered stretches follow at residues 32 to 59 (SRSA…SGPL) and 392 to 415 (EAQS…GARS). Positions 399 to 415 (SEEKATSREYAKKGARS) are enriched in basic and acidic residues.

It belongs to the membrane fusion protein (MFP) (TC 8.A.1) family. As to quaternary structure, part of a tripartite efflux system composed of MdtA, MdtB and MdtC.

The protein resides in the cell inner membrane. Functionally, the MdtABC tripartite complex confers resistance against novobiocin and deoxycholate. This Escherichia coli (strain SMS-3-5 / SECEC) protein is Multidrug resistance protein MdtA.